The primary structure comprises 168 residues: Ribosome maturation factor RimM (168 aa).

Residues 96–168 (VDEYYWGDLI…TIRVDWQKDW (73 aa)) form the PRC barrel domain.

This sequence belongs to the RimM family. As to quaternary structure, binds ribosomal protein uS19.

It localises to the cytoplasm. Its function is as follows. An accessory protein needed during the final step in the assembly of 30S ribosomal subunit, possibly for assembly of the head region. Essential for efficient processing of 16S rRNA. May be needed both before and after RbfA during the maturation of 16S rRNA. It has affinity for free ribosomal 30S subunits but not for 70S ribosomes. This Aromatoleum aromaticum (strain DSM 19018 / LMG 30748 / EbN1) (Azoarcus sp. (strain EbN1)) protein is Ribosome maturation factor RimM.